Here is a 161-residue protein sequence, read N- to C-terminus: Lectin-like protein EP153R (161 aa).

Topologically, residues 1-30 (MFSNKKYIGLIDKYCEKKILDDSSTIKICY) are cytoplasmic. A helical membrane pass occupies residues 31 to 51 (ILIGILIGTNMITLIYNFIFW). At 52 to 161 (ENYITCNQKD…HVSLLYICSK (110 aa)) the chain is on the extracellular side. C66 and C77 are oxidised to a cystine. The interval 66 to 160 (CPKDWVGYNN…KHVSLLYICS (95 aa)) is lectin-like. Residues N89, N98, N104, N110, N116, N130, and N136 are each glycosylated (N-linked (GlcNAc...) asparagine; by host). Residues C94 and C159 are joined by a disulfide bond.

It belongs to the asfivirus lectin-like protein family. In terms of assembly, homodimer.

It localises to the host endoplasmic reticulum membrane. Its function is as follows. Down-regulates MHC-I expression by impairing the appropriate configuration or presentation into the plasma membrane of the latter. Participates in viral hemadsorption, which may help viral spread. Reduces the transactivating activity of host TP53, thus inhibiting apoptosis. Non-essential for virus growth in swine macrophage cell cultures. This chain is Lectin-like protein EP153R, found in African swine fever virus (isolate Tick/Malawi/Lil 20-1/1983) (ASFV).